A 100-amino-acid polypeptide reads, in one-letter code: ESAT-6-like protein EsxB (100 aa).

It belongs to the WXG100 family. CFP-10 subfamily. As to quaternary structure, forms a tight 1:1 complex with EsxA.

It localises to the secreted. Its function is as follows. A secreted protein that might play a role in virulence. Might serve as a chaperone to prevent uncontrolled membrane lysis by its partner EsxA. This is ESAT-6-like protein EsxB (esxB) from Mycobacterium leprae (strain TN).